Reading from the N-terminus, the 630-residue chain is Long-chain-fatty-acid--AMP ligase FadD32 (630 aa).

ATP-binding positions include 187–192 (TSGSTR), S342, A346, D469, and R483.

This sequence belongs to the ATP-dependent AMP-binding enzyme family. As to quaternary structure, monomer.

The catalysed reaction is a long-chain fatty acid + holo-[ACP] + ATP = a long-chain fatty acyl-[ACP] + AMP + diphosphate. It catalyses the reaction decanoate + ATP + H(+) = decanoyl-AMP + diphosphate. It carries out the reaction dodecanoate + ATP + H(+) = dodecanoyl-AMP + diphosphate. The enzyme catalyses tetradecanoate + ATP + H(+) = tetradecanoyl-AMP + diphosphate. It functions in the pathway lipid metabolism; mycolic acid biosynthesis. The acyl-AMP ligase activity is inhibited by the alkylphosphate ester of AMP, adenosine 50-dodecylphosphate (AMPC12). Also inhibited by eicosyl-AMP (AMPC20). Involved in the biosynthesis of mycolic acids. Catalyzes the activation of long-chain fatty acids as acyl-adenylates (acyl-AMP), which are then transferred to the phosphopantetheine arm of the polyketide synthase Pks13 for further chain extension. Can use decanoate (C10), dodecanoate (C12) and tetradecanoate (C14). This Mycolicibacterium smegmatis (strain ATCC 700084 / mc(2)155) (Mycobacterium smegmatis) protein is Long-chain-fatty-acid--AMP ligase FadD32.